Here is a 123-residue protein sequence, read N- to C-terminus: MVRATGSVASRSRRKRVLKQAKGFWGDRKGHFRQSRSSVMRAMAFNYMHRKDRKGDFRSLWITRLSVASRIHGLSYSRLINGLKQAGIHLNRKMLSEMAIHDPQGFAVVATQAKLALEAAVQG.

Belongs to the bacterial ribosomal protein bL20 family.

In terms of biological role, binds directly to 23S ribosomal RNA and is necessary for the in vitro assembly process of the 50S ribosomal subunit. It is not involved in the protein synthesizing functions of that subunit. This is Large ribosomal subunit protein bL20 (rplT) from Chlamydia trachomatis serovar D (strain ATCC VR-885 / DSM 19411 / UW-3/Cx).